The chain runs to 131 residues: D-ribose pyranase (131 aa).

Histidine 20 serves as the catalytic Proton donor. Residues aspartate 28, histidine 98, and 120–122 each bind substrate; that span reads YAN.

It belongs to the RbsD / FucU family. RbsD subfamily. Homodecamer.

The protein localises to the cytoplasm. The enzyme catalyses beta-D-ribopyranose = beta-D-ribofuranose. It functions in the pathway carbohydrate metabolism; D-ribose degradation; D-ribose 5-phosphate from beta-D-ribopyranose: step 1/2. Catalyzes the interconversion of beta-pyran and beta-furan forms of D-ribose. The sequence is that of D-ribose pyranase from Bacillus mycoides (strain KBAB4) (Bacillus weihenstephanensis).